The sequence spans 435 residues: MAESATDSGNVAEQYSLLPKLMPNLDRHLIYPLLNFSADEDAEQPLDQKKLLLELLKPTNMTDFVGQLYQDVHNLDDMPDEYKTKRDQVLQRRDKLEEETSKISGLLDDENVVTNLRSDKVQNLAYLKDTHGVTVEMVNQLYEFGSFQYSCGVYPHAAELLYRFRVLVRNIQEREATWGKLACEFLSVNWDSAIEEINKLKETIDTRLFNNPLAQLQHRTWLIHWSLFPLFNHEPARESLTDMFFSPSYINTIQTNCPWILRYLAAAVITNRNKGRNSNQYQKQLKDLIRIVRQEGYEYSDPVTDFIKALYIDFDFEEAQKKLSETEEILKNDFFLLGAADQFVDAARHLISESYCKIHQRIDIKDLSTRLGLSQDEGEKWIVNLIRDTRVDAKIDYKAGTVIMNHPPQSVYQQVIERTKGGFFRTQVLSAAVAK.

Positions 241–409 (TDMFFSPSYI…GTVIMNHPPQ (169 aa)) constitute a PCI domain.

Belongs to the eIF-3 subunit E family. As to quaternary structure, component of the eukaryotic translation initiation factor 3 (eIF-3) complex.

The protein localises to the cytoplasm. Its function is as follows. Component of the eukaryotic translation initiation factor 3 (eIF-3) complex, which is involved in protein synthesis of a specialized repertoire of mRNAs and, together with other initiation factors, stimulates binding of mRNA and methionyl-tRNAi to the 40S ribosome. The eIF-3 complex specifically targets and initiates translation of a subset of mRNAs involved in cell proliferation. The protein is Eukaryotic translation initiation factor 3 subunit E of Phaeosphaeria nodorum (strain SN15 / ATCC MYA-4574 / FGSC 10173) (Glume blotch fungus).